A 570-amino-acid chain; its full sequence is Rho GTPase-activating protein gacEE (570 aa).

The PH domain maps to 127-233 (NSDISGVLLK…WVTTINNCID (107 aa)). The region spanning 224–343 (WVTTINNCID…PNGSEISLWL (120 aa)) is the C2 domain. Ca(2+)-binding residues include aspartate 260, aspartate 266, aspartate 312, aspartate 314, and aspartate 320. The Rho-GAP domain maps to 381–567 (NSLEAIVKNR…FVFENSQQIL (187 aa)).

Requires Ca(2+) as cofactor.

It localises to the cytoplasm. Rho GTPase-activating protein involved in the signal transduction pathway. In Dictyostelium discoideum (Social amoeba), this protein is Rho GTPase-activating protein gacEE (gacEE).